We begin with the raw amino-acid sequence, 200 residues long: Probable nicotinate-nucleotide adenylyltransferase (200 aa).

The protein belongs to the NadD family.

The catalysed reaction is nicotinate beta-D-ribonucleotide + ATP + H(+) = deamido-NAD(+) + diphosphate. The protein operates within cofactor biosynthesis; NAD(+) biosynthesis; deamido-NAD(+) from nicotinate D-ribonucleotide: step 1/1. Functionally, catalyzes the reversible adenylation of nicotinate mononucleotide (NaMN) to nicotinic acid adenine dinucleotide (NaAD). The chain is Probable nicotinate-nucleotide adenylyltransferase from Leifsonia xyli subsp. xyli (strain CTCB07).